A 492-amino-acid polypeptide reads, in one-letter code: N-succinylglutamate 5-semialdehyde dehydrogenase (492 aa).

220-225 (GSASTG) serves as a coordination point for NAD(+). Residues E243 and C277 contribute to the active site.

The protein belongs to the aldehyde dehydrogenase family. AstD subfamily.

It carries out the reaction N-succinyl-L-glutamate 5-semialdehyde + NAD(+) + H2O = N-succinyl-L-glutamate + NADH + 2 H(+). The protein operates within amino-acid degradation; L-arginine degradation via AST pathway; L-glutamate and succinate from L-arginine: step 4/5. Catalyzes the NAD-dependent reduction of succinylglutamate semialdehyde into succinylglutamate. The chain is N-succinylglutamate 5-semialdehyde dehydrogenase from Salmonella gallinarum (strain 287/91 / NCTC 13346).